The chain runs to 122 residues: Small ribosomal subunit protein uS12c (122 aa).

It belongs to the universal ribosomal protein uS12 family. As to quaternary structure, part of the 30S ribosomal subunit.

It localises to the plastid. Its subcellular location is the chloroplast. With S4 and S5 plays an important role in translational accuracy. Located at the interface of the 30S and 50S subunits. This Cyanidioschyzon merolae (strain NIES-3377 / 10D) (Unicellular red alga) protein is Small ribosomal subunit protein uS12c (rps12).